We begin with the raw amino-acid sequence, 94 residues long: Large ribosomal subunit protein bL25 (94 aa).

Belongs to the bacterial ribosomal protein bL25 family. As to quaternary structure, part of the 50S ribosomal subunit; part of the 5S rRNA/L5/L18/L25 subcomplex. Contacts the 5S rRNA. Binds to the 5S rRNA independently of L5 and L18.

This is one of the proteins that binds to the 5S RNA in the ribosome where it forms part of the central protuberance. The polypeptide is Large ribosomal subunit protein bL25 (Salmonella gallinarum (strain 287/91 / NCTC 13346)).